The following is a 277-amino-acid chain: Undecaprenyl-diphosphatase (277 aa).

A run of 7 helical transmembrane segments spans residues 3–23 (IALL…EFLP), 44–64 (AKVF…LVYW), 82–102 (QFAL…LLFG), 109–129 (LFTP…ILWA), 188–208 (ATDF…VYSL), 218–238 (ADVP…WLCI), and 249–269 (SFIP…ATAW).

The protein belongs to the UppP family.

Its subcellular location is the cell inner membrane. It catalyses the reaction di-trans,octa-cis-undecaprenyl diphosphate + H2O = di-trans,octa-cis-undecaprenyl phosphate + phosphate + H(+). In terms of biological role, catalyzes the dephosphorylation of undecaprenyl diphosphate (UPP). Confers resistance to bacitracin. This is Undecaprenyl-diphosphatase from Polaromonas sp. (strain JS666 / ATCC BAA-500).